A 574-amino-acid polypeptide reads, in one-letter code: Splicing factor U2af large subunit A (574 aa).

Positions 1–180 are disordered; it reads MAEHEEQPYE…SKRVSGFDQG (180 aa). Positions 18–41 are enriched in low complexity; the sequence is PAPASAYAEYPAPEGSPPAAAAKP. The span at 53–143 shows a compositional bias: basic and acidic residues; sequence RSQHETQPHD…ERRRDRDRDG (91 aa). Positions 144 to 172 are enriched in basic residues; the sequence is HRRHRSRSRSPSKGRDRRSRSRSRSRSSK. RRM domains follow at residues 238–321, 358–436, and 479–565; these read RRVY…RPTD, DRIF…RANQ, and QVVS…YPED.

The protein belongs to the splicing factor SR family.

The protein resides in the nucleus. In terms of biological role, necessary for the splicing of pre-mRNA. This Oryza sativa subsp. japonica (Rice) protein is Splicing factor U2af large subunit A (U2AF65A).